Here is a 158-residue protein sequence, read N- to C-terminus: 6,7-dimethyl-8-ribityllumazine synthase (158 aa).

5-amino-6-(D-ribitylamino)uracil-binding positions include Phe-23, 61-63, and 85-87; these read SFE and AVI. 90–91 contributes to the (2S)-2-hydroxy-3-oxobutyl phosphate binding site; sequence ET. His-93 acts as the Proton donor in catalysis. Phe-118 is a 5-amino-6-(D-ribitylamino)uracil binding site. Arg-132 contacts (2S)-2-hydroxy-3-oxobutyl phosphate.

This sequence belongs to the DMRL synthase family.

It catalyses the reaction (2S)-2-hydroxy-3-oxobutyl phosphate + 5-amino-6-(D-ribitylamino)uracil = 6,7-dimethyl-8-(1-D-ribityl)lumazine + phosphate + 2 H2O + H(+). It functions in the pathway cofactor biosynthesis; riboflavin biosynthesis; riboflavin from 2-hydroxy-3-oxobutyl phosphate and 5-amino-6-(D-ribitylamino)uracil: step 1/2. Catalyzes the formation of 6,7-dimethyl-8-ribityllumazine by condensation of 5-amino-6-(D-ribitylamino)uracil with 3,4-dihydroxy-2-butanone 4-phosphate. This is the penultimate step in the biosynthesis of riboflavin. This is 6,7-dimethyl-8-ribityllumazine synthase from Prochlorococcus marinus (strain AS9601).